Consider the following 258-residue polypeptide: GTP cyclohydrolase FolE2 (258 aa).

It belongs to the GTP cyclohydrolase IV family.

It catalyses the reaction GTP + H2O = 7,8-dihydroneopterin 3'-triphosphate + formate + H(+). It functions in the pathway cofactor biosynthesis; 7,8-dihydroneopterin triphosphate biosynthesis; 7,8-dihydroneopterin triphosphate from GTP: step 1/1. Converts GTP to 7,8-dihydroneopterin triphosphate. This chain is GTP cyclohydrolase FolE2, found in Pseudothermotoga lettingae (strain ATCC BAA-301 / DSM 14385 / NBRC 107922 / TMO) (Thermotoga lettingae).